The following is a 729-amino-acid chain: Probable ATP-dependent RNA helicase DDX17 (729 aa).

The interval 20–115 (EAATVASATG…PPKKFGNPGE (96 aa)) is disordered. Serine 64 is subject to Phosphoserine. Over residues 86-95 (GDRDRDRDRG) the composition is skewed to basic and acidic residues. The segment covering 96–105 (GFGARGGGGL) has biased composition (gly residues). Lysine 108, lysine 109, and lysine 121 each carry N6-acetyllysine; by EP300. Lysine 129 is covalently cross-linked (Glycyl lysine isopeptide (Lys-Gly) (interchain with G-Cter in SUMO); alternate). Lysine 129 is covalently cross-linked (Glycyl lysine isopeptide (Lys-Gly) (interchain with G-Cter in SUMO1); alternate). Lysine 129 participates in a covalent cross-link: Glycyl lysine isopeptide (Lys-Gly) (interchain with G-Cter in SUMO2); alternate. The Q motif signature appears at 171 to 199 (FAFHHANFPQYVMDVLMDQHFTEPTPIQC). Positions 202-377 (FPLALSGRDM…EDFLRDYTQI (176 aa)) constitute a Helicase ATP-binding domain. ATP is bound at residue 215–222 (AQTGSGKT). A DEAD box motif is present at residues 325-328 (DEAD). The 148-residue stretch at 405-552 (KLIQLMEEIM…AINPKLMQLV (148 aa)) folds into the Helicase C-terminal domain. Threonine 523 carries the post-translational modification Phosphothreonine. Lysine 528 participates in a covalent cross-link: Glycyl lysine isopeptide (Lys-Gly) (interchain with G-Cter in SUMO2). Positions 547 to 729 (KLMQLVDHRG…PPPPPPPSRK (183 aa)) are transactivation domain. Disordered stretches follow at residues 551–623 (LVDH…GSPN) and 659–729 (TYGA…PSRK). Positions 568–578 (RTTSSANNPNL) are enriched in polar residues. Positions 583-610 (ECDRRLRGVKDGGRRDSASYRDRSETDR) are enriched in basic and acidic residues. A compositionally biased stretch (low complexity) spans 659-688 (TYGASSTTSTGRSSQSSSQQFSGIGRSGQQ). Residue arginine 684 is modified to Omega-N-methylarginine. Residues 689–698 (PQPLMSQQFA) are compositionally biased toward polar residues. Residues 717–729 (YPPPPPPPPPSRK) show a composition bias toward pro residues. Residues 718-726 (PPPPPPPPP) are interaction with YAP1.

It belongs to the DEAD box helicase family. DDX5/DBP2 subfamily. As to quaternary structure, interacts with DDX5 in an RNA-independent manner. Interacts with CDK9 transcription elongation complex under basal conditions. Following cell stimulation with poly(I:C), a synthetic double-stranded RNA mimicking viral infection, the interaction with CDK9 is decreased. Interacts with ESR1 in an estrogen-independent manner. Interacts with HNRNPH1; this interaction is important for the regulation of alternative splicing on G-quadruplex structures. At high, but not low, cell density, interacts with DROSHA and DGCR8, the core components of the microprocessor complex involved in the maturation of primary microRNAs (pri-miRNAs) into pre-miRNAs. The interaction with DGCR8 is reduced during mitosis. At low, but not high, cell density, interacts with YAP1 and with its paralog, WWTR1/TAZ. Interactions with DROSHA and YAP1 are mutually exclusive. In vitro, the pre-miRNA processing activity of the DDX17-containing microprocessor complex is weaker than that of the DROSHA/DGCR8 microprocessor complex devoid of DDX17. Interacts with UPF3B. Interacts with NFAT5; this interaction leads to DDX17 recruitment to LNC2 and S100A4 promoters and NFAT5-mediated DDX17-enhanced transactivation. Interacts with HDAC1, HDAC2 and HDAC3; this interaction with HDAC1 and HDAC3, but not HDAC2, depends upon DDX17 acetylation. Interacts with ZC3HAV1 (via N-terminal domain) in an RNA-independent manner. Interacts with EXOSC3/RRP40 and EXOSC5/RRP46; this interaction may be indirect and mediated by ZC3HAV1-binding. Interacts with EP300; this interaction leads to acetylation at lysine residues. Interacts with CREBBP/CBP and KAT2B/P/CAF. Directly interacts with CTNNB1. Interacts with MYOD1. Interacts with TP53. Interacts with DCP1A in an RNA-independent manner. Interacts with DCP2 in an RNA-dependent manner. Interacts with DHX36; this interaction occurs in a RNA-dependent manner. Interacts with ERCC6. Post-translationally, sumoylation significantly increases stability. It also promotes interaction specifically with HDAC1 (but not HDAC2, nor HDAC3) and strongly stimulates ESR1 and TP53 coactivation. Acetylation at lysine residues stabilizes the protein, stimulates interaction with HDAC1 and HDAC3, but not HDAC2, and represses ESR1 and TP53 coactivation activity. In terms of tissue distribution, widely expressed. Low expression, if any, in normal colonic epithelial cells (at protein level). Levels tend to increase during colon cancer progression, from very low in benign hyperplastic polyps to very high in tubular and villous adenomas.

The protein resides in the nucleus. It is found in the nucleolus. It localises to the cytoplasm. The protein localises to the cytosol. The enzyme catalyses ATP + H2O = ADP + phosphate + H(+). As an RNA helicase, unwinds RNA and alters RNA structures through ATP binding and hydrolysis. Involved in multiple cellular processes, including pre-mRNA splicing, alternative splicing, ribosomal RNA processing and miRNA processing, as well as transcription regulation. Regulates the alternative splicing of exons exhibiting specific features. For instance, promotes the inclusion of AC-rich alternative exons in CD44 transcripts. This function requires the RNA helicase activity. Affects NFAT5 and histone macro-H2A.1/MACROH2A1 alternative splicing in a CDK9-dependent manner. In NFAT5, promotes the introduction of alternative exon 4, which contains 2 stop codons and may target NFAT5 exon 4-containing transcripts to nonsense-mediated mRNA decay, leading to the down-regulation of NFAT5 protein. Affects splicing of mediators of steroid hormone signaling pathway, including kinases that phosphorylates ESR1, such as CDK2, MAPK1 and GSK3B, and transcriptional regulators, such as CREBBP, MED1, NCOR1 and NCOR2. By affecting GSK3B splicing, participates in ESR1 and AR stabilization. In myoblasts and epithelial cells, cooperates with HNRNPH1 to control the splicing of specific subsets of exons. In addition to binding mature mRNAs, also interacts with certain pri-microRNAs, including MIR663/miR-663a, MIR99B/miR-99b, and MIR6087/miR-6087. Binds pri-microRNAs on the 3' segment flanking the stem loop via the 5'-[ACG]CAUC[ACU]-3' consensus sequence. Required for the production of subsets of microRNAs, including MIR21 and MIR125B1. May be involved not only in microRNA primary transcript processing, but also stabilization. Participates in MYC down-regulation at high cell density through the production of MYC-targeting microRNAs. Along with DDX5, may be involved in the processing of the 32S intermediate into the mature 28S ribosomal RNA. Promoter-specific transcription regulator, functioning as a coactivator or corepressor depending on the context of the promoter and the transcriptional complex in which it exists. Enhances NFAT5 transcriptional activity. Synergizes with TP53 in the activation of the MDM2 promoter; this activity requires acetylation on lysine residues. May also coactivate MDM2 transcription through a TP53-independent pathway. Coactivates MMP7 transcription. Along with CTNNB1, coactivates MYC, JUN, FOSL1 and cyclin D1/CCND1 transcription. Alone or in combination with DDX5 and/or SRA1 non-coding RNA, plays a critical role in promoting the assembly of proteins required for the formation of the transcription initiation complex and chromatin remodeling leading to coactivation of MYOD1-dependent transcription. This helicase-independent activity is required for skeletal muscle cells to properly differentiate into myotubes. During epithelial-to-mesenchymal transition, coregulates SMAD-dependent transcriptional activity, directly controlling key effectors of differentiation, including miRNAs which in turn directly repress its expression. Plays a role in estrogen and testosterone signaling pathway at several levels. Mediates the use of alternative promoters in estrogen-responsive genes and regulates transcription and splicing of a large number of steroid hormone target genes. Contrary to splicing regulation activity, transcriptional coregulation of the estrogen receptor ESR1 is helicase-independent. Plays a role in innate immunity. Specifically restricts bunyavirus infection, including Rift Valley fever virus (RVFV) or La Crosse virus (LACV), but not vesicular stomatitis virus (VSV), in an interferon- and DROSHA-independent manner. Binds to RVFV RNA, likely via structured viral RNA elements. Promotes mRNA degradation mediated by the antiviral zinc-finger protein ZC3HAV1, in an ATPase-dependent manner. In Homo sapiens (Human), this protein is Probable ATP-dependent RNA helicase DDX17 (DDX17).